The sequence spans 222 residues: Putative adhesin RP828 (222 aa).

A signal peptide spans 1 to 22 (MKKLLLIATASATILSSSVSFA).

Adheres to biotinylated epithelial (Vero cell) proteins. In Rickettsia prowazekii (strain Madrid E), this protein is Putative adhesin RP828.